Here is a 95-residue protein sequence, read N- to C-terminus: Large ribosomal subunit protein eL30 (95 aa).

It belongs to the eukaryotic ribosomal protein eL30 family.

The polypeptide is Large ribosomal subunit protein eL30 (Methanospirillum hungatei JF-1 (strain ATCC 27890 / DSM 864 / NBRC 100397 / JF-1)).